Consider the following 301-residue polypeptide: Small ribosomal subunit protein uS2 (301 aa).

This sequence belongs to the universal ribosomal protein uS2 family. Component of the small ribosomal subunit. Mature ribosomes consist of a small (40S) and a large (60S) subunit. The 40S subunit contains about 33 different proteins and 1 molecule of RNA (18S). The 60S subunit contains about 49 different proteins and 3 molecules of RNA (25S, 5.8S and 5S). Interacts with RPS21.

The protein localises to the cytoplasm. In terms of biological role, required for the assembly and/or stability of the 40S ribosomal subunit. Required for the processing of the 20S rRNA-precursor to mature 18S rRNA in a late step of the maturation of 40S ribosomal subunits. The polypeptide is Small ribosomal subunit protein uS2 (Ajellomyces dermatitidis (strain ER-3 / ATCC MYA-2586) (Blastomyces dermatitidis)).